The following is a 273-amino-acid chain: Transmembrane protein 202 (273 aa).

4 helical membrane-spanning segments follow: residues 53 to 75 (HIYI…IAMS), 121 to 141 (FFLI…SSWI), 155 to 175 (VSML…LFVA), and 189 to 209 (LLWT…AGII). Residues 242 to 273 (TTVSPAKDEGPRSEMESLSVREKNLPKSGLWW) are disordered. Positions 247-266 (AKDEGPRSEMESLSVREKNL) are enriched in basic and acidic residues.

Its subcellular location is the membrane. This is Transmembrane protein 202 (TMEM202) from Homo sapiens (Human).